The chain runs to 554 residues: MSSLYIKEATGVDELTTAGSQDHPFKTPAYALFASQQKSDATEPKLFVFKTEDNEYQEISASALKKARKGCDGLKKKAVKQKEQELKKQQKEAENAAKQLSALNITIKEDESLPAAIKTRIYDSYSKVGQRVKVSGWIHRLRSNKKVIFVVLRDGSGFIQCVLSGDLALAQQTLDLTLESTVTLYGTIVKLPEGKTAPGGVELNVDYYEVVGLAPGGEDSFTNKIAEGSDPSLLLDQRHLALRGDALSAVMKVRAALLKSVRRVYDEEHLTEVTPPCMVQTQVEGGSTLFKMNYYGEEAYLTQSSQLYLETCLASLGDVYTIQESFRAEKSHTRRHLSEYTHIEAELAFLTFDDLLQHIETLIVKSVQYVLEDPIAGPLVKQLNPNFKAPKAPFMRLQYKDAITWLNEHDIKNEEGEDFKFGDDIAEAAERKMTDTIGVPIFLTRFPVEIKSFYMKRCSDDPRVTESVDVLMPNVGEITGGSMRIDDMDELMAGFKREGIDTDAYYWFIDQRKYGTCPHGGYGIGTERILAWLCDRFTVRDCSLYPRFSGRCKP.

The protein belongs to the class-II aminoacyl-tRNA synthetase family.

It localises to the cytoplasm. It is found in the cytosol. It catalyses the reaction tRNA(Asn) + L-asparagine + ATP = L-asparaginyl-tRNA(Asn) + AMP + diphosphate + H(+). Its function is as follows. Catalyzes the attachment of asparagine to tRNA(Asn) in a two-step reaction: asparagine is first activated by ATP to form Asn-AMP and then transferred to the acceptor end of tRNA(Asn). The chain is Asparagine--tRNA ligase, cytoplasmic from Saccharomyces cerevisiae (strain ATCC 204508 / S288c) (Baker's yeast).